The sequence spans 793 residues: Sucrose synthase (793 aa).

The interval 259–738 (MILNIAIISP…AIKRVTEKYS (480 aa)) is GT-B glycosyltransferase.

The protein belongs to the glycosyltransferase 1 family. Homotetramer.

The enzyme catalyses an NDP-alpha-D-glucose + D-fructose = a ribonucleoside 5'-diphosphate + sucrose + H(+). Catalyzes the reversible conversion of sucrose and a nucleotide disphosphate (NDP) into fructose and NDP-glucose; although the reaction is freely reversible in vitro, the physiological reaction seems to be sucrose cleavage. Unlike characterized plant enzymes prefers ADP as a cosubstrate, whereas plants prefer UDP. Its preference for ADP over UDP suggests it may directly link sucrose and glycogen metabolism. This Melioribacter roseus (strain JCM 17771 / P3M-2) protein is Sucrose synthase.